A 384-amino-acid polypeptide reads, in one-letter code: Succinyl-diaminopimelate desuccinylase (384 aa).

H71 contacts Zn(2+). D73 is an active-site residue. Zn(2+) is bound at residue D104. E139 functions as the Proton acceptor in the catalytic mechanism. Positions 140, 168, and 357 each coordinate Zn(2+).

The protein belongs to the peptidase M20A family. DapE subfamily. As to quaternary structure, homodimer. Zn(2+) serves as cofactor. Co(2+) is required as a cofactor.

The catalysed reaction is N-succinyl-(2S,6S)-2,6-diaminopimelate + H2O = (2S,6S)-2,6-diaminopimelate + succinate. The protein operates within amino-acid biosynthesis; L-lysine biosynthesis via DAP pathway; LL-2,6-diaminopimelate from (S)-tetrahydrodipicolinate (succinylase route): step 3/3. Functionally, catalyzes the hydrolysis of N-succinyl-L,L-diaminopimelic acid (SDAP), forming succinate and LL-2,6-diaminopimelate (DAP), an intermediate involved in the bacterial biosynthesis of lysine and meso-diaminopimelic acid, an essential component of bacterial cell walls. This is Succinyl-diaminopimelate desuccinylase from Afipia carboxidovorans (strain ATCC 49405 / DSM 1227 / KCTC 32145 / OM5) (Oligotropha carboxidovorans).